The following is a 697-amino-acid chain: MKTTVTTSVGGKQITIETGRLAKQADGAALVSSGNNMVLVTATSSKKASELDFFPLTVEYIEKFYATGKIPGGYFKREAKPTNDAVLIARLIDRPIRPVFPEGYRHETQIVATVLSADGAFPLEILASLGASAALHCSDIPFNGPTAAVQIARVDGQFVANPTPQQMEKSDMDMIVAGTRNGLLMVEGETKFISEADALAALKFGHQSLIPLLNAQDELREKAGSVAKRAFTAPSIDADFKAKAESLLRPKIAAALSIKEKQDRYAAANEAAAEAEKALLADIADKELLKQRKKELNSIVEDLKYQEARSMILDRAVRIDGRDVKTVRPIANEVGILPRAHGSGLFTRGETQVLGTVTLGTADDEQMVDSLLGLQKRKFMLHYNFPPYSVGEVGRMSGTSRREIGHGNLAERAIKAVLPDFEKFPYTIRIVSEVLESNGSSSMGTVCSGIMALLDAGVPLKGNVAGVAMGLIKEGDRVAVLTDILGDEDHLGDMDFKVAGSPAGITALQMDIKIDSVSFEVMEQALAQAKEGRAHILNEMEKVMKVPRGQISEFAPRIETIKIKPDKIREVIGSGGKVIRGITEATGVKIEIQDDGTINIASADPEATKKAIAMINDIIAEAEVGKTYKGRIVKIAEFGAFVEILPNTQGLLHISEISNERVRAVSDVLKEGEIIDVKVLEVDRSGRVKLSRKALLQ.

The Mg(2+) site is built by D489 and D495. In terms of domain architecture, KH spans 556–615 (PRIETIKIKPDKIREVIGSGGKVIRGITEATGVKIEIQDDGTINIASADPEATKKAIAMI). The S1 motif domain maps to 625–693 (GKTYKGRIVK…RSGRVKLSRK (69 aa)).

Belongs to the polyribonucleotide nucleotidyltransferase family. Requires Mg(2+) as cofactor.

The protein resides in the cytoplasm. The enzyme catalyses RNA(n+1) + phosphate = RNA(n) + a ribonucleoside 5'-diphosphate. Functionally, involved in mRNA degradation. Catalyzes the phosphorolysis of single-stranded polyribonucleotides processively in the 3'- to 5'-direction. This chain is Polyribonucleotide nucleotidyltransferase, found in Bdellovibrio bacteriovorus (strain ATCC 15356 / DSM 50701 / NCIMB 9529 / HD100).